The chain runs to 2197 residues: Activating signal cointegrator 1 complex subunit 3 (2197 aa).

The residue at position 12 (Ser-12) is a Phosphoserine. Coiled-coil stretches lie at residues 18-80 (KQDN…AKQI) and 328-356 (IQSE…KAGE). In terms of domain architecture, Helicase ATP-binding 1 spans 487–670 (DTAYNTNENM…FLHVNPYIGL (184 aa)). Residue 500–507 (APTGAGKT) coordinates ATP. Position 573 is an N6-acetyllysine (Lys-573). The DEVH box signature appears at 612-615 (DEVH). Positions 697–915 (QLNNMDEVCY…GTVTNVEEAV (219 aa)) constitute a Helicase C-terminal 1 domain. Residues 979-1288 (STDLGRTASH…GAEAVCIINF (310 aa)) form the SEC63 1 domain. Residues 1337 to 1512 (HTLYHTDCNV…WLNIKQMGLF (176 aa)) enclose the Helicase ATP-binding 2 domain. 1350-1357 (APTGSGKT) is an ATP binding site. The DEIH box motif lies at 1454–1457 (DEIH). The 175-residue stretch at 1565 to 1739 (RMLSSMTKLE…VLSDHLNAEI (175 aa)) folds into the Helicase C-terminal 2 domain. The SEC63 2 domain occupies 1812-2175 (PLTCGRIASY…YLGLDQQYDI (364 aa)).

It belongs to the helicase family. As to quaternary structure, identified in the ASCC complex that contains ASCC1, ASCC2 and ASCC3. Functions as a scaffolding subunit that interacts directly with both ASCC1 and ASCC2. Interacts directly with ALKBH3, and thereby recruits ALKBH3 to the ASCC complex. Part of the ASC-1/TRIP4 complex, that contains TRIP4, ASCC1, ASCC2 and ASCC3. Part of the RQT (ribosome quality control trigger) complex, that contains ASCC2, ASCC3 and TRIP4. Associates with ribosomes; recruited to collided ribosomes. Interacts with ZCCHC4. Interacts with ZNF598. Interacts with RPS3.

The protein localises to the nucleus. Its subcellular location is the nucleus speckle. The protein resides in the cytoplasm. It localises to the cytosol. It catalyses the reaction Couples ATP hydrolysis with the unwinding of duplex DNA by translocating in the 3'-5' direction.. The enzyme catalyses ATP + H2O = ADP + phosphate + H(+). ATPase involved both in DNA repair and rescue of stalled ribosomes. 3'-5' DNA helicase involved in repair of alkylated DNA: promotes DNA unwinding to generate single-stranded substrate needed for ALKBH3, enabling ALKBH3 to process alkylated N3-methylcytosine (3mC) within double-stranded regions. Also involved in activation of the ribosome quality control (RQC) pathway, a pathway that degrades nascent peptide chains during problematic translation. Drives the splitting of stalled ribosomes that are ubiquitinated in a ZNF598-dependent manner, as part of the ribosome quality control trigger (RQT) complex. Part of the ASC-1 complex that enhances NF-kappa-B, SRF and AP1 transactivation. The sequence is that of Activating signal cointegrator 1 complex subunit 3 (Ascc3) from Rattus norvegicus (Rat).